The chain runs to 1388 residues: MSIPLHSLRFNNTMREENVEPQNKQMAFCRPMTETRADVQILHSHVQLPIVSTSASDPGGTSTQLMTSPVFDTMSAPLMGVPNSGALSPPLMPASDSGALSPLLMPASDSGALSPLLMPALDSGTLSPLLSTSEYGVMSPGMMTIPDFGTMSATLMVAPDSAEISPLAMPAPSSGVVCTPIMSTSSSEAMSTPLMLAPDSGELSPILMQDMNPGVMSTQPVPAPSSEAMSPLQITDEDTEAMSKVLMTALASGEISSLLMSGTDSEAISSLIMSAVASGGTSPQPTSTQNSGGIPTPLMSDLDSGIMSSLLMSSPGSEVMSTPLLSVPDAGEMSTLPKPAPDAEAMSPALMTALPSGVMPTQTMPAPGSGAMSPWSTQNVDSEMMSNPPVRATASGVMSAPPVRALDSGAMSTPLMGAPASGNMSTLQKTVPASGAMTTSLMTVPSSGVMSTEQMSATASRVMSAQLTMAKTSGAMPTGSMKAVAKQYKRATASGKMSTPLRRAPTSGAMSTQPVTATASETMSMPQLTVPASGSMSMLQMRAPVSEAMSMPQMRTMASGLTSAAQMKAMTSGAMSTPLMTAQTSGSTSTLLMRDTASGVMSCPQMRSLASGALSKPLMTPKASGTMFTEKMTTTASEAMPTLLMRDTVSGALSMPQMTDTASGGLSASLMRDTASGAMSTSQMTATVSGGMSMPLMRAQDPGVMPASLMRAKVSGKMLSQPMSTQDPGGMSMSPMKSMTAGGMQMNSPTSDVMSTPTVRAWTSETMSTPLMRTSDPGERPSLLTRASSSGEMSLPLMRAPASGEIATPLRSPAYGAMSAPQMTATASGMMSSMPQVKAPISGAMSMPLTRSTASGGMSMPLMRAPDSRVTSTSQMMPTASGDMCTLPVRAPASGGVSSPLVRAPASGTMSTPLRRPSACETVSTELMRASASGHMSTAQTTAMVSGGMSKPLMRAPASGTMPMPLMSAMASGEMSMPLMETMASGATSTLQTSVANSRSMSLSQTTYTVSGRMATAPIRASASGARSTSFMRASVSGSMPMPLPRATASGCGMGMSMPQMTATDSRGMSTPLMRASGPGTMSTPQTAFGVMSTPEIKATDSGEASTSHINITASGSKPTSHMTATTPETAKPPPKEVPSFGMLTPALCYLLEEQEAARGSCSVEEEMEIDEEKQMKGFLDDSERMAFLVSLHLGAAERWFILQMEVGEPLSHENKSFLRRSQGIYDSLSEIDILSAVLCHPKQGQKSVRQYATDFLLLARHLSWSDAILRTRFLEGLSEAVTTKMGRIFLKVAGSLKELIDRSLYTECQLAEEKDSPGNSSQVLPTACKRNNEEAMGNELSSQQQTEEHQHVSKRCYYLKEHGDPQEGLHDHLGQSTGHHQKAHTNK.

Disordered stretches follow at residues 491-511 (ATASGKMSTPLRRAPTSGAMS), 769-790 (TPLMRTSDPGERPSLLTRASSS), 895-918 (GGVSSPLVRAPASGTMSTPLRRPS), 1100-1138 (TDSGEASTSHINITASGSKPTSHMTATTPETAKPPPKEV), and 1336-1388 (AMGN…HTNK). A compositionally biased stretch (polar residues) spans 1103–1123 (GEASTSHINITASGSKPTSHM). The segment covering 1359 to 1374 (YLKEHGDPQEGLHDHL) has biased composition (basic and acidic residues).

The polypeptide is Retrotransposon Gag-like protein 9 (Homo sapiens (Human)).